The primary structure comprises 558 residues: Arginine--tRNA ligase (558 aa).

The short motif at 134-144 is the 'HIGH' region element; that stretch reads ANPTGPMVLVQ.

The protein belongs to the class-I aminoacyl-tRNA synthetase family. Monomer.

The protein resides in the cytoplasm. The catalysed reaction is tRNA(Arg) + L-arginine + ATP = L-arginyl-tRNA(Arg) + AMP + diphosphate. This chain is Arginine--tRNA ligase, found in Symbiobacterium thermophilum (strain DSM 24528 / JCM 14929 / IAM 14863 / T).